We begin with the raw amino-acid sequence, 272 residues long: MTSSSSNRPFSHRSPNTFLTYPQCPEQPEIISQRIWDLCSHWTPLYIICAREAHRDGNQCLHALIQTEKPVRTTDSRFFDIDGFHPNIQSAISPNKVRDYITKEPLALFERGTFIPRKKSFLGNSSKGNSDKKPSKDEIMRDIISHATSKQEYLSMVQKSLPYDWSTKLQYFEYSANKLFPDIQEEFINPHPTSEPDLLCNESIKDWLQPNIYQVSPQAYLLLQPNCYSIDDAISDLEWLDDLTSKQIMEQGSAASTSSVQQGQENLHGPEA.

The region spanning 11 to 114 (SHRSPNTFLT…PLALFERGTF (104 aa)) is the CRESS-DNA virus Rep endonuclease domain. The RCR-1 signature appears at 18–21 (FLTY). A divalent metal cation is bound by residues E52 and H62. An RCR-2 motif is present at residues 60 to 65 (CLHALI). The active-site For DNA cleavage activity is the Y100. The short motif at 100–103 (YITK) is the RCR-3 element. E104 is a binding site for a divalent metal cation. An oligomerization region spans residues 175 to 187 (SANKLFPDIQEEF). Positions 198 to 202 (LLCNE) match the LXCXE motif, interaction with host RBR1 motif. A transactivation region spans residues 221–230 (LLLQPNCYSI). The segment covering 251–265 (QGSAASTSSVQQGQE) has biased composition (polar residues). The segment at 251 to 272 (QGSAASTSSVQQGQENLHGPEA) is disordered.

It belongs to the geminiviridae Rep protein family. As to quaternary structure, homooligomer. Interacts (via LXCXE domain) with host retinoblastoma-related protein 1 (RBR1), and may thereby deregulate the host cell cycle. Part of the C- and V-complexes which are RepA-Rep-DNA complexes involved in the c-sense and v-sense transcription.

It localises to the host nucleus. The protein resides in the host cytoplasm. In terms of biological role, implicated in enhancement of V-sense gene expression. Acts a an inhibitor of C-sense gene transcription. This chain is Replication-associated protein A, found in Avena sativa (Oat).